A 599-amino-acid polypeptide reads, in one-letter code: Elongation factor 4 (599 aa).

Residues 4–186 (EHIRNFSIIA…EIVKKIPPPQ (183 aa)) enclose the tr-type G domain. Residues 16–21 (DHGKST) and 133–136 (NKID) each bind GTP.

The protein belongs to the TRAFAC class translation factor GTPase superfamily. Classic translation factor GTPase family. LepA subfamily.

The protein resides in the cell inner membrane. It carries out the reaction GTP + H2O = GDP + phosphate + H(+). Required for accurate and efficient protein synthesis under certain stress conditions. May act as a fidelity factor of the translation reaction, by catalyzing a one-codon backward translocation of tRNAs on improperly translocated ribosomes. Back-translocation proceeds from a post-translocation (POST) complex to a pre-translocation (PRE) complex, thus giving elongation factor G a second chance to translocate the tRNAs correctly. Binds to ribosomes in a GTP-dependent manner. The polypeptide is Elongation factor 4 (Geobacter sp. (strain M21)).